A 256-amino-acid chain; its full sequence is MCLETTLTKNKTLALINQGYQVLAEYEMIEQKKLRGIYAIPSYSSLLLWFGVIFIHSGMYSESAFRFSILLPDNFPDENCLPTVIFQKDIFHPHICPISHSLDLSPVFKDWHKDQHHIWHILKYIQAIFADPEGSVCNTHNGEPIPLTDVNNMEAMRLLANNRVDFALRAKASIVWSWKHMFDKPPINDPHYIIFERYRPEKHQAMMKRIKSSSWYSLPTSTSPPSTCVARIESARQLLAEEEAQTRGFHSLEMVE.

The 163-residue stretch at 17–179 folds into the UBC core domain; sequence NQGYQVLAEY…AKASIVWSWK (163 aa).

This sequence belongs to the ubiquitin-conjugating enzyme family. FTS subfamily.

The protein is Protein crossbronx-like of Drosophila mojavensis (Fruit fly).